A 420-amino-acid polypeptide reads, in one-letter code: Serine hydroxymethyltransferase (420 aa).

(6S)-5,6,7,8-tetrahydrofolate contacts are provided by residues Leu-118 and Gly-122–Leu-124. Position 227 is an N6-(pyridoxal phosphate)lysine (Lys-227).

It belongs to the SHMT family. As to quaternary structure, homodimer. The cofactor is pyridoxal 5'-phosphate.

Its subcellular location is the cytoplasm. The catalysed reaction is (6R)-5,10-methylene-5,6,7,8-tetrahydrofolate + glycine + H2O = (6S)-5,6,7,8-tetrahydrofolate + L-serine. The protein operates within one-carbon metabolism; tetrahydrofolate interconversion. Its pathway is amino-acid biosynthesis; glycine biosynthesis; glycine from L-serine: step 1/1. Functionally, catalyzes the reversible interconversion of serine and glycine with tetrahydrofolate (THF) serving as the one-carbon carrier. This reaction serves as the major source of one-carbon groups required for the biosynthesis of purines, thymidylate, methionine, and other important biomolecules. Also exhibits THF-independent aldolase activity toward beta-hydroxyamino acids, producing glycine and aldehydes, via a retro-aldol mechanism. The chain is Serine hydroxymethyltransferase from Persephonella marina (strain DSM 14350 / EX-H1).